The sequence spans 153 residues: Ribosomal RNA large subunit methyltransferase H (153 aa).

S-adenosyl-L-methionine is bound by residues Leu-71, Gly-102, and 121 to 126 (LSRMTL).

The protein belongs to the RNA methyltransferase RlmH family. Homodimer.

It localises to the cytoplasm. The enzyme catalyses pseudouridine(1915) in 23S rRNA + S-adenosyl-L-methionine = N(3)-methylpseudouridine(1915) in 23S rRNA + S-adenosyl-L-homocysteine + H(+). Specifically methylates the pseudouridine at position 1915 (m3Psi1915) in 23S rRNA. This chain is Ribosomal RNA large subunit methyltransferase H, found in Anaeromyxobacter sp. (strain Fw109-5).